Consider the following 239-residue polypeptide: Large ribosomal subunit protein uL1 (239 aa).

It belongs to the universal ribosomal protein uL1 family. Part of the 50S ribosomal subunit.

In terms of biological role, binds directly to 23S rRNA. The L1 stalk is quite mobile in the ribosome, and is involved in E site tRNA release. Protein L1 is also a translational repressor protein, it controls the translation of the L11 operon by binding to its mRNA. The protein is Large ribosomal subunit protein uL1 of Rickettsia conorii (strain ATCC VR-613 / Malish 7).